Reading from the N-terminus, the 456-residue chain is DnaJ homolog dnj-10 (456 aa).

Residues 44–108 (DYYKTLGVDK…TKRQEYDAYG (65 aa)) enclose the J domain. The CR-type zinc-finger motif lies at 178 to 257 (GATKNVSVNV…CEGEGQTVQR (80 aa)). CXXCXGXG motif repeat units lie at residues 208–215 (CPYCNGTG), 231–238 (CNRCRGSG), and 245–252 (CQECEGEG). Basic and acidic residues predominate over residues 395–429 (KGLEKNQKTEEKETKKNEEKKSEGASESQKRRSEP). Positions 395 to 443 (KGLEKNQKTEEKETKKNEEKKSEGASESQKRRSEPVAENAETIDENQEN) are disordered.

The polypeptide is DnaJ homolog dnj-10 (dnj-10) (Caenorhabditis elegans).